The primary structure comprises 598 residues: Proline--tRNA ligase (598 aa).

This sequence belongs to the class-II aminoacyl-tRNA synthetase family. ProS type 1 subfamily. Homodimer.

It localises to the cytoplasm. The enzyme catalyses tRNA(Pro) + L-proline + ATP = L-prolyl-tRNA(Pro) + AMP + diphosphate. Catalyzes the attachment of proline to tRNA(Pro) in a two-step reaction: proline is first activated by ATP to form Pro-AMP and then transferred to the acceptor end of tRNA(Pro). As ProRS can inadvertently accommodate and process non-cognate amino acids such as alanine and cysteine, to avoid such errors it has two additional distinct editing activities against alanine. One activity is designated as 'pretransfer' editing and involves the tRNA(Pro)-independent hydrolysis of activated Ala-AMP. The other activity is designated 'posttransfer' editing and involves deacylation of mischarged Ala-tRNA(Pro). The misacylated Cys-tRNA(Pro) is not edited by ProRS. In Rippkaea orientalis (strain PCC 8801 / RF-1) (Cyanothece sp. (strain PCC 8801)), this protein is Proline--tRNA ligase.